Here is a 475-residue protein sequence, read N- to C-terminus: Protein nucleotidyltransferase YdiU (475 aa).

Residues G82, G84, R85, K105, D117, G118, R168, and R175 each contribute to the ATP site. D240 functions as the Proton acceptor in the catalytic mechanism. Residues N241 and D250 each contribute to the Mg(2+) site. D250 contacts ATP.

Belongs to the SELO family. The cofactor is Mg(2+). Mn(2+) is required as a cofactor.

It carries out the reaction L-seryl-[protein] + ATP = 3-O-(5'-adenylyl)-L-seryl-[protein] + diphosphate. It catalyses the reaction L-threonyl-[protein] + ATP = 3-O-(5'-adenylyl)-L-threonyl-[protein] + diphosphate. The enzyme catalyses L-tyrosyl-[protein] + ATP = O-(5'-adenylyl)-L-tyrosyl-[protein] + diphosphate. The catalysed reaction is L-histidyl-[protein] + UTP = N(tele)-(5'-uridylyl)-L-histidyl-[protein] + diphosphate. It carries out the reaction L-seryl-[protein] + UTP = O-(5'-uridylyl)-L-seryl-[protein] + diphosphate. It catalyses the reaction L-tyrosyl-[protein] + UTP = O-(5'-uridylyl)-L-tyrosyl-[protein] + diphosphate. In terms of biological role, nucleotidyltransferase involved in the post-translational modification of proteins. It can catalyze the addition of adenosine monophosphate (AMP) or uridine monophosphate (UMP) to a protein, resulting in modifications known as AMPylation and UMPylation. The polypeptide is Protein nucleotidyltransferase YdiU (Aeromonas hydrophila subsp. hydrophila (strain ATCC 7966 / DSM 30187 / BCRC 13018 / CCUG 14551 / JCM 1027 / KCTC 2358 / NCIMB 9240 / NCTC 8049)).